Here is a 1393-residue protein sequence, read N- to C-terminus: DNA-directed RNA polymerase subunit beta'' (1393 aa).

4 residues coordinate Zn(2+): C220, C291, C298, and C301.

Belongs to the RNA polymerase beta' chain family. RpoC2 subfamily. In terms of assembly, in plastids the minimal PEP RNA polymerase catalytic core is composed of four subunits: alpha, beta, beta', and beta''. When a (nuclear-encoded) sigma factor is associated with the core the holoenzyme is formed, which can initiate transcription. Zn(2+) serves as cofactor.

Its subcellular location is the plastid. The protein localises to the chloroplast. It carries out the reaction RNA(n) + a ribonucleoside 5'-triphosphate = RNA(n+1) + diphosphate. DNA-dependent RNA polymerase catalyzes the transcription of DNA into RNA using the four ribonucleoside triphosphates as substrates. The sequence is that of DNA-directed RNA polymerase subunit beta'' from Gossypium hirsutum (Upland cotton).